The sequence spans 293 residues: 1D-myo-inositol 2-acetamido-2-deoxy-alpha-D-glucopyranoside deacetylase (293 aa).

3 residues coordinate Zn(2+): histidine 16, aspartate 19, and histidine 156.

It belongs to the MshB deacetylase family. It depends on Zn(2+) as a cofactor.

It carries out the reaction 1D-myo-inositol 2-acetamido-2-deoxy-alpha-D-glucopyranoside + H2O = 1D-myo-inositol 2-amino-2-deoxy-alpha-D-glucopyranoside + acetate. In terms of biological role, catalyzes the deacetylation of 1D-myo-inositol 2-acetamido-2-deoxy-alpha-D-glucopyranoside (GlcNAc-Ins) in the mycothiol biosynthesis pathway. The chain is 1D-myo-inositol 2-acetamido-2-deoxy-alpha-D-glucopyranoside deacetylase from Nakamurella multipartita (strain ATCC 700099 / DSM 44233 / CIP 104796 / JCM 9543 / NBRC 105858 / Y-104) (Microsphaera multipartita).